Reading from the N-terminus, the 157-residue chain is Endoribonuclease YbeY (157 aa).

Zn(2+) is bound by residues His118, His122, and His128.

It belongs to the endoribonuclease YbeY family. Zn(2+) serves as cofactor.

It is found in the cytoplasm. In terms of biological role, single strand-specific metallo-endoribonuclease involved in late-stage 70S ribosome quality control and in maturation of the 3' terminus of the 16S rRNA. The polypeptide is Endoribonuclease YbeY (Bordetella parapertussis (strain 12822 / ATCC BAA-587 / NCTC 13253)).